The sequence spans 284 residues: ATP synthase subunit a (284 aa).

5 helical membrane passes run 47-67, 108-128, 156-176, 233-253, and 254-274; these read AFHL…LIFF, VAPL…MDLV, VPTA…ILII, MIFI…SLPW, and AIFH…LVIV.

Belongs to the ATPase A chain family. F-type ATPases have 2 components, CF(1) - the catalytic core - and CF(0) - the membrane proton channel. CF(1) has five subunits: alpha(3), beta(3), gamma(1), delta(1), epsilon(1). CF(0) has three main subunits: a(1), b(2) and c(9-12). The alpha and beta chains form an alternating ring which encloses part of the gamma chain. CF(1) is attached to CF(0) by a central stalk formed by the gamma and epsilon chains, while a peripheral stalk is formed by the delta and b chains.

The protein resides in the cell inner membrane. Key component of the proton channel; it plays a direct role in the translocation of protons across the membrane. This is ATP synthase subunit a from Ruthia magnifica subsp. Calyptogena magnifica.